We begin with the raw amino-acid sequence, 486 residues long: UDP-N-acetylmuramoyl-L-alanyl-D-glutamate--2,6-diaminopimelate ligase (486 aa).

Ser-33 lines the UDP-N-acetyl-alpha-D-muramoyl-L-alanyl-D-glutamate pocket. An ATP-binding site is contributed by 110-116; the sequence is GTNGKTS. UDP-N-acetyl-alpha-D-muramoyl-L-alanyl-D-glutamate-binding positions include 152–153, Ser-179, Gln-185, and Arg-187; that span reads TT. Lys-219 is subject to N6-carboxylysine. Residues Arg-383, 407-410, Gly-455, and Glu-459 each bind meso-2,6-diaminopimelate; that span reads DNPR. A Meso-diaminopimelate recognition motif motif is present at residues 407–410; sequence DNPR.

It belongs to the MurCDEF family. MurE subfamily. Requires Mg(2+) as cofactor. Carboxylation is probably crucial for Mg(2+) binding and, consequently, for the gamma-phosphate positioning of ATP.

It localises to the cytoplasm. It carries out the reaction UDP-N-acetyl-alpha-D-muramoyl-L-alanyl-D-glutamate + meso-2,6-diaminopimelate + ATP = UDP-N-acetyl-alpha-D-muramoyl-L-alanyl-gamma-D-glutamyl-meso-2,6-diaminopimelate + ADP + phosphate + H(+). It participates in cell wall biogenesis; peptidoglycan biosynthesis. In terms of biological role, catalyzes the addition of meso-diaminopimelic acid to the nucleotide precursor UDP-N-acetylmuramoyl-L-alanyl-D-glutamate (UMAG) in the biosynthesis of bacterial cell-wall peptidoglycan. This Zymomonas mobilis subsp. mobilis (strain ATCC 31821 / ZM4 / CP4) protein is UDP-N-acetylmuramoyl-L-alanyl-D-glutamate--2,6-diaminopimelate ligase.